A 320-amino-acid chain; its full sequence is Transcription factor bHLH34 (320 aa).

Positions 162–213 (SKPGTKACREKLRREKLNDKFMDLSSVLEPGRTPKTDKSAILDDAIRVVNQL) constitute a bHLH domain. The tract at residues 299-320 (WSPLPPADRDTSRDLKNLPPVA) is disordered. The span at 305–314 (ADRDTSRDLK) shows a compositional bias: basic and acidic residues.

As to quaternary structure, homodimer. As to expression, expressed constitutively in roots, leaves, stems, and flowers.

It is found in the nucleus. The chain is Transcription factor bHLH34 (BHLH34) from Arabidopsis thaliana (Mouse-ear cress).